Reading from the N-terminus, the 129-residue chain is Holo-[acyl-carrier-protein] synthase (129 aa).

Mg(2+)-binding residues include Asp8 and Glu58.

Belongs to the P-Pant transferase superfamily. AcpS family. Requires Mg(2+) as cofactor.

It localises to the cytoplasm. The enzyme catalyses apo-[ACP] + CoA = holo-[ACP] + adenosine 3',5'-bisphosphate + H(+). Functionally, transfers the 4'-phosphopantetheine moiety from coenzyme A to a Ser of acyl-carrier-protein. The sequence is that of Holo-[acyl-carrier-protein] synthase from Acidithiobacillus ferrooxidans (strain ATCC 53993 / BNL-5-31) (Leptospirillum ferrooxidans (ATCC 53993)).